The chain runs to 345 residues: Phosphate acyltransferase (345 aa).

Belongs to the PlsX family. Homodimer. Probably interacts with PlsY.

Its subcellular location is the cytoplasm. The enzyme catalyses a fatty acyl-[ACP] + phosphate = an acyl phosphate + holo-[ACP]. It functions in the pathway lipid metabolism; phospholipid metabolism. In terms of biological role, catalyzes the reversible formation of acyl-phosphate (acyl-PO(4)) from acyl-[acyl-carrier-protein] (acyl-ACP). This enzyme utilizes acyl-ACP as fatty acyl donor, but not acyl-CoA. The chain is Phosphate acyltransferase from Anaplasma phagocytophilum (strain HZ).